Consider the following 176-residue polypeptide: Inner membrane-spanning protein YciB (176 aa).

Helical transmembrane passes span 3–23 (FLFD…WGIF), 24–44 (TATA…AFRH), 49–69 (TMLW…LVLH), 81–101 (LYWL…NNLI), 121–141 (VAWA…VHNF), and 149–169 (FKLF…SLWL).

This sequence belongs to the YciB family.

Its subcellular location is the cell inner membrane. In terms of biological role, plays a role in cell envelope biogenesis, maintenance of cell envelope integrity and membrane homeostasis. The chain is Inner membrane-spanning protein YciB from Burkholderia lata (strain ATCC 17760 / DSM 23089 / LMG 22485 / NCIMB 9086 / R18194 / 383).